The primary structure comprises 50 residues: U23-theraphotoxin-Cg1a 2 (50 aa).

Disulfide bonds link C22–C36, C29–C41, and C35–C47.

The protein belongs to the neurotoxin 10 (Hwtx-1) family. 64 (Jztx-20) subfamily. Expressed by the venom gland.

It localises to the secreted. Probable ion channel inhibitor. The protein is U23-theraphotoxin-Cg1a 2 of Chilobrachys guangxiensis (Chinese earth tiger tarantula).